The chain runs to 532 residues: NMDA receptor synaptonuclear signaling and neuronal migration factor (532 aa).

Glycine 2 carries the N-myristoyl glycine lipid modification. The necessary and sufficient to elicit dendritic processes and synaptic contacts stretch occupies residues 2–235 (GAAASRRRAL…FSFQTATTTM (234 aa)). Disordered regions lie at residues 34 to 67 (SQSH…APHN) and 127 to 174 (RRQR…GCAK). A compositionally biased stretch (basic and acidic residues) spans 38–48 (PENRNGADHLL). The segment covering 127–139 (RRQRERHPHHHSQ) has biased composition (basic residues). Polar residues predominate over residues 155-164 (PCQSWAGSRQ). Serine 206 is subject to Phosphoserine. The short motif at 247–252 (RKRRKR) is the Nuclear localization signal element. The disordered stretch occupies residues 275–315 (RVKAQTFAERRERSFSRSWSDPTPMKADTSHDSRDSSDLQS). Residues serine 292 and serine 294 each carry the phosphoserine modification. Residues 302–311 (DTSHDSRDSS) show a composition bias toward basic and acidic residues.

Belongs to the NSMF family. As to quaternary structure, interacts with KPNA1; the interaction occurs in a calcium-independent manner after synaptic NMDA receptor stimulation and is required for nuclear import of NSMF but is competed by CABP1. Interacts (via the central NLS-containing motif region) with CABP1 (via EF-hands 1 and 2); the interaction occurs in a calcium-dependent manner after synaptic NMDA receptor stimulation and prevents the nuclear import of NSMF. Cannot be competed by calmodulin. In terms of processing, proteolytically processed after NMDA receptor activation. Cleaved in a calcium-dependent and calpain-sensitive manner. Calpain cleavage is essential for the translocation process from dendrites to the nucleus. In terms of tissue distribution, expressed in the radiatum and pyramidale strata of the hippocampus (at protein level). Strongly expressed in the brain. Expressed in the sensory and motor cortex, hippocampus, olfactory bulb, thalamus and amygdala. In the olfactory bulb expressed in the granular cell layer, mitral cell layer and the glomerular layer. In the hippocampus highly expressed in the regions associated with neuronal cell types as CA1, CA2, CA3 and granule cells of the dentate gyrus. All isoforms have been detected in the molecular layers of the hippocampus.

It is found in the nucleus. It localises to the nucleus envelope. The protein localises to the nucleus membrane. Its subcellular location is the nucleus matrix. The protein resides in the cytoplasm. It is found in the cell cortex. It localises to the cytoskeleton. The protein localises to the cell membrane. Its subcellular location is the cell projection. The protein resides in the dendrite. It is found in the synapse. It localises to the synaptosome. The protein localises to the postsynaptic density. Its subcellular location is the membrane. Functionally, couples NMDA-sensitive glutamate receptor signaling to the nucleus and triggers long-lasting changes in the cytoarchitecture of dendrites and spine synapse processes. Part of the cAMP response element-binding protein (CREB) shut-off signaling pathway. Stimulates outgrowth of olfactory axons and migration of gonadotropin-releasing hormone (GnRH) and luteinizing-hormone-releasing hormone (LHRH) neuronal cells. This Rattus norvegicus (Rat) protein is NMDA receptor synaptonuclear signaling and neuronal migration factor (Nsmf).